Consider the following 372-residue polypeptide: MATSPQKSPSVPKSPTPKSPPSRKKDDSFLGKLGGTLARRKKAKEVSELQEEGMNAINLPLSPIPFELDPEDTMLEENEVRTMVDPNSRSDPKLQELMKVLIDWINDVLVGERIIVKDLAEDLYDGQVLQKLFEKLESEKLNVAEVTQSEIAQKQKLQTVLEKINETLKLPPRSIKWNVDSVHAKSLVAILHLLVALSQYFRAPIRLPDHVSIQVVVVQKREGILQSRQIQEEITGNTEALSGRHERDAFDTLFDHAPDKLNVVKKTLITFVNKHLNKLNLEVTELETQFADGVYLVLLMGLLEGYFVPLHSFFLTPDSFEQKVLNVSFAFELMQDGGLEKPKPRPEDIVNCDLKSTLRVLYNLFTKYRNVE.

Residues 1-11 are compositionally biased toward low complexity; sequence MATSPQKSPSV. The segment at 1–45 is disordered; it reads MATSPQKSPSVPKSPTPKSPPSRKKDDSFLGKLGGTLARRKKAKE. Alanine 2 is modified (N-acetylalanine). Phosphoserine is present on residues serine 8, serine 14, and serine 19. The interval 21–25 is interaction with ARHGAP31; that stretch reads PSRKK. Phosphoserine occurs at positions 28 and 62. Calponin-homology (CH) domains follow at residues 95-202 and 262-369; these read QELM…QYFR and NVVK…TKYR. The tract at residues 223–372 is required for interaction with TESK1 and ILK; that stretch reads GILQSRQIQE…NLFTKYRNVE (150 aa).

Belongs to the parvin family. In terms of assembly, component of the heterotrimeric IPP (ILK-PINCH-PARVIN) complex composed of ILK, LIMS1/PINCH and PARVA; the complex binds to F-actin via the C-terminal tail of LIMS1 and the N-terminal region of PARVA, promoting F-actin filament bundling. Formation of the IPP complex is dependent on protein kinase C and precedes integrin-mediated cell adhesion and spreading. Interacts with TGFB1I1. Interacts with ARHGAP31. Interacts with the actin cytoskeleton. Interacts (via C-terminus) with TESK1 (via C-terminus); the interaction inhibits TESK1 kinase activity. Interacts with PXN/PAXILLIN (via LD motif 4). In terms of tissue distribution, widely expressed, with highest levels in heart, skeletal muscle, kidney and liver.

The protein resides in the cell junction. It localises to the focal adhesion. The protein localises to the cell membrane. Its subcellular location is the cytoplasm. It is found in the cytoskeleton. The protein resides in the myofibril. It localises to the sarcomere. The protein localises to the z line. Its function is as follows. Plays a role in sarcomere organization and in smooth muscle cell contraction. Required for normal development of the embryonic cardiovascular system, and for normal septation of the heart outflow tract. Plays a role in sprouting angiogenesis and is required for normal adhesion of vascular smooth muscle cells to endothelial cells during blood vessel development. Plays a role in the reorganization of the actin cytoskeleton, formation of lamellipodia and ciliogenesis. Plays a role in the establishment of cell polarity, cell adhesion, cell spreading, and directed cell migration. Within the IPP (ILK-PINCH-PARVIN) complex, binds to F-actin, promoting F-actin bundling, a process required to generate force for actin cytoskeleton reorganization and subsequent dynamic cell adhesion events such as cell spreading and migration. This chain is Alpha-parvin (PARVA), found in Homo sapiens (Human).